Here is a 274-residue protein sequence, read N- to C-terminus: 3-methyl-2-oxobutanoate hydroxymethyltransferase (274 aa).

Mg(2+) is bound by residues D50 and D89. 3-methyl-2-oxobutanoate contacts are provided by residues D50–S51, D89, and K119. E121 lines the Mg(2+) pocket. Residue E188 is the Proton acceptor of the active site.

The protein belongs to the PanB family. Homodecamer; pentamer of dimers. Requires Mg(2+) as cofactor.

Its subcellular location is the cytoplasm. The catalysed reaction is 3-methyl-2-oxobutanoate + (6R)-5,10-methylene-5,6,7,8-tetrahydrofolate + H2O = 2-dehydropantoate + (6S)-5,6,7,8-tetrahydrofolate. The protein operates within cofactor biosynthesis; (R)-pantothenate biosynthesis; (R)-pantoate from 3-methyl-2-oxobutanoate: step 1/2. Functionally, catalyzes the reversible reaction in which hydroxymethyl group from 5,10-methylenetetrahydrofolate is transferred onto alpha-ketoisovalerate to form ketopantoate. This chain is 3-methyl-2-oxobutanoate hydroxymethyltransferase, found in Methylorubrum extorquens (strain PA1) (Methylobacterium extorquens).